Here is a 142-residue protein sequence, read N- to C-terminus: Large ribosomal subunit protein uL11 (142 aa).

This sequence belongs to the universal ribosomal protein uL11 family. In terms of assembly, part of the ribosomal stalk of the 50S ribosomal subunit. Interacts with L10 and the large rRNA to form the base of the stalk. L10 forms an elongated spine to which L12 dimers bind in a sequential fashion forming a multimeric L10(L12)X complex. In terms of processing, one or more lysine residues are methylated.

Forms part of the ribosomal stalk which helps the ribosome interact with GTP-bound translation factors. This is Large ribosomal subunit protein uL11 from Xanthomonas campestris pv. campestris (strain B100).